A 129-amino-acid polypeptide reads, in one-letter code: MKSVQFCFLFCCWKAICCSSCELTNITIAVEKEECRFCISINTTWCSGYCYTRDLVYKDPARPNIQKICTFKELVYETVRVPGCAHHADSLYTYPVATECHCGNCDSDSTDCTVRGLGPSYCSFGEMKE.

Positions 1-18 are cleaved as a signal peptide; that stretch reads MKSVQFCFLFCCWKAICC. 6 disulfide bridges follow: Cys-21-Cys-69, Cys-35-Cys-84, Cys-38-Cys-122, Cys-46-Cys-100, Cys-50-Cys-102, and Cys-105-Cys-112. N-linked (GlcNAc...) asparagine glycans are attached at residues Asn-25 and Asn-42.

Belongs to the glycoprotein hormones subunit beta family. In terms of assembly, heterodimer. The active follitropin is a heterodimer composed of an alpha chain/CGA shared with other hormones and a unique beta chain/FSHB shown here.

It is found in the secreted. Together with the alpha chain CGA constitutes follitropin, the follicle-stimulating hormone, and provides its biological specificity to the hormone heterodimer. Binds FSHR, a G protein-coupled receptor, on target cells to activate downstream signaling pathways. Follitropin is involved in follicle development and spermatogenesis in reproductive organs. The polypeptide is Follitropin subunit beta (FSHB) (Oryctolagus cuniculus (Rabbit)).